Reading from the N-terminus, the 105-residue chain is Probable tetrachloroethene reductive dehalogenase membrane anchor protein (105 aa).

Helical transmembrane passes span 3–23 (IYDV…QYGI), 35–55 (IPLQ…LAWG), and 66–86 (AIGM…IITY).

Belongs to the PceB family.

It is found in the cell membrane. Functionally, may act as a membrane anchor for the tetrachloroethene reductive dehalogenase PceA. The sequence is that of Probable tetrachloroethene reductive dehalogenase membrane anchor protein from Desulfitobacterium hafniense (Desulfitobacterium frappieri).